Here is a 472-residue protein sequence, read N- to C-terminus: Carboxypeptidase Q (472 aa).

Residues Met1–Gly20 form the signal peptide. A propeptide spanning residues Lys21–Gly44 is cleaved from the precursor. Residues Asn52, Asn61, and Asn179 are each glycosylated (N-linked (GlcNAc...) asparagine). Residues His290 and Asp302 each coordinate Zn(2+). The active-site Nucleophile is Glu336. Residue Glu337 participates in Zn(2+) binding. 2 N-linked (GlcNAc...) asparagine glycosylation sites follow: Asn353 and Asn356. Asp364 lines the Zn(2+) pocket. Asn396 carries an N-linked (GlcNAc...) asparagine glycan. His434 lines the Zn(2+) pocket.

The protein belongs to the peptidase M28 family. As to quaternary structure, homodimer. The monomeric form is inactive while the homodimer is active. N-glycosylated. The secreted form is modified by hybrid or complex type oligosaccharide chains.

The protein resides in the endoplasmic reticulum. It localises to the golgi apparatus. The protein localises to the lysosome. Its subcellular location is the secreted. Carboxypeptidase that may play an important role in the hydrolysis of circulating peptides. Catalyzes the hydrolysis of dipeptides with unsubstituted terminals into amino acids. May play a role in the liberation of thyroxine hormone from its thyroglobulin (Tg) precursor. The sequence is that of Carboxypeptidase Q (CPQ) from Bos taurus (Bovine).